Consider the following 87-residue polypeptide: Acyl-CoA-binding protein (87 aa).

Ser-2 carries the N-acetylserine modification. Positions 2-87 constitute an ACB domain; it reads SQAEFDKAAE…VEDLKKKYGI (86 aa). An N6-acetyllysine; alternate modification is found at Lys-8. Lys-8 bears the N6-succinyllysine; alternate mark. Lys-14 provides a ligand contact to an acyl-CoA. Lys-17 carries the N6-succinyllysine modification. N6-acetyllysine is present on Lys-19. Residue Tyr-29 is modified to Phosphotyrosine. An acyl-CoA is bound by residues 29–33, Lys-55, and Tyr-74; that span reads YSHYK. Position 55 is an N6-acetyllysine; alternate (Lys-55). Position 55 is an N6-succinyllysine; alternate (Lys-55). An N6-(2-hydroxyisobutyryl)lysine; alternate modification is found at Lys-55. Lys-55 carries the post-translational modification N6-malonyllysine; alternate. Residue Lys-77 is modified to N6-acetyllysine; alternate. The residue at position 77 (Lys-77) is an N6-succinyllysine; alternate.

This sequence belongs to the ACBP family. In terms of assembly, monomer.

It is found in the endoplasmic reticulum. The protein localises to the golgi apparatus. Its function is as follows. Binds medium- and long-chain acyl-CoA esters with very high affinity and may function as an intracellular carrier of acyl-CoA esters. The chain is Acyl-CoA-binding protein (DBI) from Canis lupus familiaris (Dog).